The sequence spans 292 residues: Homoserine kinase (292 aa).

An ATP-binding site is contributed by 84–94 (PLSRGLGSSSA).

This sequence belongs to the GHMP kinase family. Homoserine kinase subfamily.

The protein resides in the cytoplasm. The catalysed reaction is L-homoserine + ATP = O-phospho-L-homoserine + ADP + H(+). It functions in the pathway amino-acid biosynthesis; L-threonine biosynthesis; L-threonine from L-aspartate: step 4/5. Functionally, catalyzes the ATP-dependent phosphorylation of L-homoserine to L-homoserine phosphate. This Campylobacter jejuni subsp. jejuni serotype O:23/36 (strain 81-176) protein is Homoserine kinase.